The primary structure comprises 234 residues: Small ribosomal subunit protein eS4 (234 aa).

In terms of domain architecture, S4 RNA-binding spans 43–106 (MPIAVWLRDY…NEYYRVLLDE (64 aa)).

Belongs to the eukaryotic ribosomal protein eS4 family.

The sequence is that of Small ribosomal subunit protein eS4 from Nanoarchaeum equitans (strain Kin4-M).